The following is a 255-amino-acid chain: Pimeloyl-[acyl-carrier protein] methyl ester esterase (255 aa).

Residues tryptophan 18, serine 78–leucine 79, and phenylalanine 139–aspartate 143 contribute to the substrate site. Residue serine 78 is the Nucleophile of the active site. Residues aspartate 203 and histidine 233 contribute to the active site. A substrate-binding site is contributed by histidine 233.

It belongs to the AB hydrolase superfamily. Carboxylesterase BioH family. In terms of assembly, monomer.

The protein localises to the cytoplasm. The enzyme catalyses 6-carboxyhexanoyl-[ACP] methyl ester + H2O = 6-carboxyhexanoyl-[ACP] + methanol + H(+). It participates in cofactor biosynthesis; biotin biosynthesis. Functionally, the physiological role of BioH is to remove the methyl group introduced by BioC when the pimeloyl moiety is complete. It allows to synthesize pimeloyl-ACP via the fatty acid synthetic pathway through the hydrolysis of the ester bonds of pimeloyl-ACP esters. This is Pimeloyl-[acyl-carrier protein] methyl ester esterase from Xylella fastidiosa (strain M23).